The chain runs to 221 residues: Flagellar L-ring protein 1 (221 aa).

The N-terminal stretch at 1–16 (MKRFLILTPMVLALCG) is a signal peptide. Cysteine 17 carries N-palmitoyl cysteine lipidation. The S-diacylglycerol cysteine moiety is linked to residue cysteine 17.

This sequence belongs to the FlgH family. In terms of assembly, the basal body constitutes a major portion of the flagellar organelle and consists of four rings (L,P,S, and M) mounted on a central rod.

The protein resides in the cell outer membrane. It is found in the bacterial flagellum basal body. Assembles around the rod to form the L-ring and probably protects the motor/basal body from shearing forces during rotation. In Yersinia pestis, this protein is Flagellar L-ring protein 1.